A 316-amino-acid chain; its full sequence is Golgi to ER traffic protein 2 (316 aa).

The disordered stretch occupies residues 1-75 (MATELSDAEK…SDEEVEKSTK (75 aa)). Residues 1–167 (MATELSDAEK…LKYYKFKVSK (167 aa)) are Cytoplasmic-facing. Over residues 7–19 (DAEKRKLLRERRQ) the composition is skewed to basic and acidic residues. Composition is skewed to polar residues over residues 22 to 48 (FSNGGASSRLNKITGQQQNSFLSSTSV) and 56 to 65 (PSGNKKSSNV). A helical membrane pass occupies residues 168-187 (LKSYIILIKWALLAPYVYFI). Residues 188 to 209 (MHPNPTVLQASNLLSQIVERSN) are Lumenal-facing. Residues 210 to 229 (FFSIFTGLEIVFISIYYQML) form a helical membrane-spanning segment. Residues 230–276 (KKLQRDNNVTATQNAGGILKYLTMIPEGILPIRNIQGKIGLALEYFD) lie on the Cytoplasmic side of the membrane. A helical membrane pass occupies residues 277–297 (VASMYVTDICFVLVLFGVMKY). Over 298-316 (YHSSFPISVPIEPPIAGIQ) the chain is Lumenal.

This sequence belongs to the GET2 family. In terms of assembly, component of the Golgi to ER traffic (GET) complex, which is composed of GET1, GET2 and GET3. Within the complex, GET1 and GET2 form a heterotetramer which is stabilized by phosphatidylinositol binding and which binds to the GET3 homodimer.

It localises to the endoplasmic reticulum membrane. The protein resides in the golgi apparatus membrane. In terms of biological role, required for the post-translational delivery of tail-anchored (TA) proteins to the endoplasmic reticulum. Together with GET1, acts as a membrane receptor for soluble GET3, which recognizes and selectively binds the transmembrane domain of TA proteins in the cytosol. The GET complex cooperates with the HDEL receptor ERD2 to mediate the ATP-dependent retrieval of resident ER proteins that contain a C-terminal H-D-E-L retention signal from the Golgi to the ER. The protein is Golgi to ER traffic protein 2 of Kluyveromyces lactis (strain ATCC 8585 / CBS 2359 / DSM 70799 / NBRC 1267 / NRRL Y-1140 / WM37) (Yeast).